Reading from the N-terminus, the 311-residue chain is Probable cell division protein WhiA (311 aa).

Positions 274-307 (SLKELGSLLTPPLTKSGVNHRFRKLELIAEKIRN) form a DNA-binding region, H-T-H motif.

It belongs to the WhiA family.

Its function is as follows. Involved in cell division and chromosome segregation. This chain is Probable cell division protein WhiA, found in Carboxydothermus hydrogenoformans (strain ATCC BAA-161 / DSM 6008 / Z-2901).